The following is a 389-amino-acid chain: Putative cyclin-F3-1 (389 aa).

The segment at 1 to 103 (MEAAAAAAAE…GAAGGSRQPV (103 aa)) is disordered. The span at 19-43 (VEGAAVAAVAPEAAAEGPSEPNAGE) shows a compositional bias: low complexity.

Belongs to the cyclin family. Cyclin F subfamily.

In Oryza sativa subsp. japonica (Rice), this protein is Putative cyclin-F3-1 (CYCF3-1).